Reading from the N-terminus, the 218-residue chain is Large ribosomal subunit protein uL3 (218 aa).

Belongs to the universal ribosomal protein uL3 family. As to quaternary structure, part of the 50S ribosomal subunit. Forms a cluster with proteins L14 and L19.

Its function is as follows. One of the primary rRNA binding proteins, it binds directly near the 3'-end of the 23S rRNA, where it nucleates assembly of the 50S subunit. The sequence is that of Large ribosomal subunit protein uL3 from Corynebacterium glutamicum (strain R).